We begin with the raw amino-acid sequence, 1365 residues long: Killer toxin-resistance protein 5 (1365 aa).

Residues 1 to 17 form the signal peptide; it reads MRLLALVLLLLCAPLRA. Residues N115, N228, N293, N457, N519, N523, N644, N870, N1091, N1150, and N1195 are each glycosylated (N-linked (GlcNAc...) asparagine). A disordered region spans residues 1334–1365; that stretch reads FASSPGDEDVPGESVSSKYQDSDNAAPLHDEL. The span at 1347-1356 shows a compositional bias: polar residues; it reads SVSSKYQDSD. Positions 1362 to 1365 match the Prevents secretion from ER motif; the sequence is HDEL.

The protein to D.melanogaster UGGG.

It is found in the endoplasmic reticulum lumen. Functionally, required for (1-&gt;6)-beta-D-glucan synthesis and normal cell growth. The sequence is that of Killer toxin-resistance protein 5 (KRE5) from Saccharomyces cerevisiae (strain ATCC 204508 / S288c) (Baker's yeast).